A 258-amino-acid chain; its full sequence is NAD kinase (258 aa).

Residue aspartate 51 is the Proton acceptor of the active site. NAD(+) contacts are provided by residues 51–52, lysine 56, 119–120, lysine 130, aspartate 149, 160–165, and alanine 184; these read DG, ND, and TAYSLS.

Belongs to the NAD kinase family. The cofactor is a divalent metal cation.

The protein localises to the cytoplasm. It carries out the reaction NAD(+) + ATP = ADP + NADP(+) + H(+). Functionally, involved in the regulation of the intracellular balance of NAD and NADP, and is a key enzyme in the biosynthesis of NADP. Catalyzes specifically the phosphorylation on 2'-hydroxyl of the adenosine moiety of NAD to yield NADP. The protein is NAD kinase of Thermotoga sp. (strain RQ2).